The sequence spans 120 residues: C-type natriuretic peptide 4 (120 aa).

The N-terminal stretch at 1-22 is a signal peptide; that stretch reads MNLSYLVACGLMITLLSVRMGA. The propeptide occupies 23-96; it reads KPLSQAQQKS…PRRHKTGIKK (74 aa). C104 and C120 are oxidised to a cystine.

The protein belongs to the natriuretic peptide family.

It is found in the secreted. Exhibits natriuretic and vasodepressant activity. Has cGMP-stimulating activity. May help to regulate body fluid homeostasis in a variety of aquatic environments. In Takifugu rubripes (Japanese pufferfish), this protein is C-type natriuretic peptide 4.